Reading from the N-terminus, the 442-residue chain is tRNA modification GTPase MnmE (442 aa).

R22, E79, and K118 together coordinate (6S)-5-formyl-5,6,7,8-tetrahydrofolate. The TrmE-type G domain occupies 215-365; sequence EIPIAIVGRP…LEKAILFEYQ (151 aa). Residue N225 coordinates K(+). GTP contacts are provided by residues 225–230, 244–250, and 269–272; these read NVGKSS, TNIEGTT, and DTAG. Residue S229 coordinates Mg(2+). 3 residues coordinate K(+): T244, I246, and T249. Mg(2+) is bound at residue T250. K442 is a (6S)-5-formyl-5,6,7,8-tetrahydrofolate binding site.

Belongs to the TRAFAC class TrmE-Era-EngA-EngB-Septin-like GTPase superfamily. TrmE GTPase family. Homodimer. Heterotetramer of two MnmE and two MnmG subunits. The cofactor is K(+).

Its subcellular location is the cytoplasm. In terms of biological role, exhibits a very high intrinsic GTPase hydrolysis rate. Involved in the addition of a carboxymethylaminomethyl (cmnm) group at the wobble position (U34) of certain tRNAs, forming tRNA-cmnm(5)s(2)U34. This Mycoplasmopsis pulmonis (strain UAB CTIP) (Mycoplasma pulmonis) protein is tRNA modification GTPase MnmE.